Here is a 150-residue protein sequence, read N- to C-terminus: D-aminoacyl-tRNA deacylase (150 aa).

The Gly-cisPro motif, important for rejection of L-amino acids signature appears at 138-139 (GP).

It belongs to the DTD family. In terms of assembly, homodimer.

The protein resides in the cytoplasm. It catalyses the reaction glycyl-tRNA(Ala) + H2O = tRNA(Ala) + glycine + H(+). The enzyme catalyses a D-aminoacyl-tRNA + H2O = a tRNA + a D-alpha-amino acid + H(+). In terms of biological role, an aminoacyl-tRNA editing enzyme that deacylates mischarged D-aminoacyl-tRNAs. Also deacylates mischarged glycyl-tRNA(Ala), protecting cells against glycine mischarging by AlaRS. Acts via tRNA-based rather than protein-based catalysis; rejects L-amino acids rather than detecting D-amino acids in the active site. By recycling D-aminoacyl-tRNA to D-amino acids and free tRNA molecules, this enzyme counteracts the toxicity associated with the formation of D-aminoacyl-tRNA entities in vivo and helps enforce protein L-homochirality. The sequence is that of D-aminoacyl-tRNA deacylase from Bacteroides thetaiotaomicron (strain ATCC 29148 / DSM 2079 / JCM 5827 / CCUG 10774 / NCTC 10582 / VPI-5482 / E50).